Here is a 267-residue protein sequence, read N- to C-terminus: Hydroxyethylthiazole kinase (267 aa).

Position 44 (Met44) interacts with substrate. The ATP site is built by Arg120 and Thr165. Residue Gly192 coordinates substrate.

Belongs to the Thz kinase family. Mg(2+) serves as cofactor.

It carries out the reaction 5-(2-hydroxyethyl)-4-methylthiazole + ATP = 4-methyl-5-(2-phosphooxyethyl)-thiazole + ADP + H(+). The protein operates within cofactor biosynthesis; thiamine diphosphate biosynthesis; 4-methyl-5-(2-phosphoethyl)-thiazole from 5-(2-hydroxyethyl)-4-methylthiazole: step 1/1. Catalyzes the phosphorylation of the hydroxyl group of 4-methyl-5-beta-hydroxyethylthiazole (THZ). The protein is Hydroxyethylthiazole kinase of Carboxydothermus hydrogenoformans (strain ATCC BAA-161 / DSM 6008 / Z-2901).